The sequence spans 1045 residues: MDIS1-interacting receptor like kinase 2 (1045 aa).

A signal peptide spans 1–43 (MNKTNPERKISLTSFKERMACKEKPRDLQVLLIISIVLSCSFA). The Extracellular segment spans residues 44-709 (VSATVEEANA…SKKSHKDRNL (666 aa)). Asparagine 63, asparagine 77, asparagine 99, and asparagine 119 each carry an N-linked (GlcNAc...) asparagine glycan. 24 LRR repeats span residues 92–116 (LGSI…PFSS), 117–140 (LPNL…LWGR), 141–165 (FSKL…LGDL), 166–189 (SNLD…IGRL), 191–212 (KVTE…SFGN), 213–237 (LTKL…IGNL), 238–260 (PNLR…SFGN), 262–285 (KNVT…IGNM), 286–309 (TALD…LGNI), 311–333 (TLAV…LGEM), 334–356 (ESMI…SFGK), 357–381 (LTAL…IANS), 383–405 (ELTV…ICRG), 406–429 (GKLE…LRDC), 431–452 (SLIR…AFGV), 453–476 (YPTL…NWEQ), 477–501 (SQKL…IWNM), 502–525 (TQLS…ISNI), 527–549 (RISK…IRLL), 550–573 (TNLE…LNNL), 575–597 (RLYY…LTKL), 598–620 (SQLQ…QFRS), 621–644 (LQNL…SFKD), and 646–670 (LALT…AFRN). Asparagine 179 and asparagine 212 each carry an N-linked (GlcNAc...) asparagine glycan. 3 N-linked (GlcNAc...) asparagine glycosylation sites follow: asparagine 249, asparagine 263, and asparagine 284. A glycan (N-linked (GlcNAc...) asparagine) is linked at asparagine 323. N-linked (GlcNAc...) asparagine glycosylation is found at asparagine 380, asparagine 393, and asparagine 410. N-linked (GlcNAc...) asparagine glycosylation is found at asparagine 487 and asparagine 500. Residue asparagine 580 is glycosylated (N-linked (GlcNAc...) asparagine). Asparagine 633 is a glycosylation site (N-linked (GlcNAc...) asparagine). Asparagine 687 carries an N-linked (GlcNAc...) asparagine glycan. The helical transmembrane segment at 710–730 (IIYILVPIIGAIIILSVCAGI) threads the bilayer. The Cytoplasmic segment spans residues 731–1045 (FICFRKRTKQ…TMLSISTAFS (315 aa)). Threonine 772 bears the Phosphothreonine mark. The region spanning 775–1045 (FDPKYLIGTG…TMLSISTAFS (271 aa)) is the Protein kinase domain. ATP-binding positions include 781–789 (IGTGGHGKV) and lysine 802. 2 positions are modified to phosphotyrosine: tyrosine 853 and tyrosine 892. The active-site Proton acceptor is the aspartate 905. A Phosphoserine modification is found at serine 938. Phosphotyrosine occurs at positions 946 and 953.

This sequence belongs to the protein kinase superfamily. Ser/Thr protein kinase family. As to quaternary structure, interacts with MDIS1 and LURE1.2. Binds to SCOOP12; this interaction triggers the formation of complex between MIK2 and the BAK1/SERK3 and SERK4 coreceptors. In terms of tissue distribution, expressed in pollen tubes. Highly expressed in shoots, roots and leaves.

The protein localises to the cell membrane. The catalysed reaction is L-seryl-[protein] + ATP = O-phospho-L-seryl-[protein] + ADP + H(+). It carries out the reaction L-threonyl-[protein] + ATP = O-phospho-L-threonyl-[protein] + ADP + H(+). Its function is as follows. Acts as a receptor of SCOOP peptides from Brassicaceae plants regulating multiple processing including plant growth, development and stress responses. Perception of SCOOP peptides induces the association of MIK2 with the coreceptors BAK1/SERK3 and SERK4 and relays the signaling through the activation of receptor-like cytosolic kinases (RLCKs) BIK1 and PBL1. Also able to detect SCOOP-like proteins (SCOOPL) present in fungal Fusarium spp. and bacterial Comamonadaceae to elicit various immune responses, including growth inhibition, ROS production, calcium Ca(2+) influx, MAPK activation and MYB51 promoter activation in roots, thus being required for resistance to several root pathogens. Involved in the pollen tube perception of the female signal. Required to trigger defense responses toward generalist herbivores such as Spodoptera littoralis, probably via the activation of jasmonate and indole glucosinolate biosynthesis. The protein is MDIS1-interacting receptor like kinase 2 of Arabidopsis thaliana (Mouse-ear cress).